We begin with the raw amino-acid sequence, 92 residues long: Large ribosomal subunit protein eL43 (92 aa).

The C4-type zinc finger occupies 39-60; sequence CSFCGKKAVKRGAAGIWNCSSC.

Belongs to the eukaryotic ribosomal protein eL43 family.

This chain is Large ribosomal subunit protein eL43 (RPL43), found in Eremothecium gossypii (strain ATCC 10895 / CBS 109.51 / FGSC 9923 / NRRL Y-1056) (Yeast).